A 460-amino-acid chain; its full sequence is UDP-N-acetylmuramoylalanine--D-glutamate ligase (460 aa).

Residue 120 to 126 participates in ATP binding; it reads GSNGKTT.

Belongs to the MurCDEF family.

The protein resides in the cytoplasm. It catalyses the reaction UDP-N-acetyl-alpha-D-muramoyl-L-alanine + D-glutamate + ATP = UDP-N-acetyl-alpha-D-muramoyl-L-alanyl-D-glutamate + ADP + phosphate + H(+). It functions in the pathway cell wall biogenesis; peptidoglycan biosynthesis. In terms of biological role, cell wall formation. Catalyzes the addition of glutamate to the nucleotide precursor UDP-N-acetylmuramoyl-L-alanine (UMA). This chain is UDP-N-acetylmuramoylalanine--D-glutamate ligase, found in Lactobacillus johnsonii (strain CNCM I-12250 / La1 / NCC 533).